Here is a 330-residue protein sequence, read N- to C-terminus: MKNILNRLINHETLSKQEAKNMLVNISNGSYNPSQIASFLTVYMMRNITINELAGFREALLELCIPIDLSAYNTIDLCGTGGDGKDTFNISTLASFVTAGAGIKVAKHGNYGVSSISGSSNVMENLGIKFSNDPIFLEKCIDQAGICVLHAPLFHPAMKNVAPIRKELAVKTFFNMLGPMVNPSFPKNQLVGVFNLELARMYSYLYQNTKTNYTILHSLDGYDEISLTGNTKTITNKMEGMLKPEDFGVNLLSQTDIQGGTTIQESAQMFVTILSGKGTEAQNNVVCANAGMAIATVNNLNPIQGFELAKESLLSGKGLETLKKLQQLSL.

Residues glycine 79, 82–83 (GD), threonine 87, 89–92 (NIST), 107–115 (KHGNYGVSS), and serine 119 each bind 5-phospho-alpha-D-ribose 1-diphosphate. Glycine 79 is a binding site for anthranilate. Serine 91 is a Mg(2+) binding site. Asparagine 110 contacts anthranilate. Arginine 165 is an anthranilate binding site. Mg(2+) is bound by residues aspartate 223 and glutamate 224.

It belongs to the anthranilate phosphoribosyltransferase family. In terms of assembly, homodimer. Requires Mg(2+) as cofactor.

It catalyses the reaction N-(5-phospho-beta-D-ribosyl)anthranilate + diphosphate = 5-phospho-alpha-D-ribose 1-diphosphate + anthranilate. The protein operates within amino-acid biosynthesis; L-tryptophan biosynthesis; L-tryptophan from chorismate: step 2/5. Catalyzes the transfer of the phosphoribosyl group of 5-phosphorylribose-1-pyrophosphate (PRPP) to anthranilate to yield N-(5'-phosphoribosyl)-anthranilate (PRA). In Flavobacterium psychrophilum (strain ATCC 49511 / DSM 21280 / CIP 103535 / JIP02/86), this protein is Anthranilate phosphoribosyltransferase.